The chain runs to 147 residues: CLAVATA3/ESR (CLE)-related protein 4C (147 aa).

Positions 1–21 (MATNTMLCLFVISVVLALAFA) are cleaved as a signal peptide. The required for secretion from the host cytoplasm to the host apoplasm stretch occupies residues 21 to 83 (ATNKKGDEEP…SNQLPNNNWM (63 aa)). The N-linked (GlcNAc...) asparagine glycan is linked to asparagine 32. Disordered regions lie at residues 57–86 (GADA…MAPP) and 116–147 (RKTG…PIHH). Over residues 125–137 (HHEETTLEQEKRV) the composition is skewed to basic and acidic residues. Residues 136–147 (RVAGAGPDPIHH) carry the CLE motif.

Belongs to the CLV3/ESR signal peptide family. In terms of tissue distribution, highly expressed exclusively within the dorsal esophageal gland cell during syncytium formation in host plants.

It is found in the secreted. Its subcellular location is the host cytoplasm. The protein resides in the host extracellular space. It localises to the extracellular space. The protein localises to the apoplast. Functionally, mimics host plant CLE extracellular signal peptides that regulate cell fate. May play a role in the differentiation or division of feeding cells (syncytia) induced in plant roots during infection. In Globodera rostochiensis (Golden nematode worm), this protein is CLAVATA3/ESR (CLE)-related protein 4C (CLE-4C).